The following is a 471-amino-acid chain: UDP-N-acetylmuramoylalanine--D-glutamate ligase (471 aa).

120-126 is a binding site for ATP; it reads GSNGKTT.

This sequence belongs to the MurCDEF family.

The protein resides in the cytoplasm. The enzyme catalyses UDP-N-acetyl-alpha-D-muramoyl-L-alanine + D-glutamate + ATP = UDP-N-acetyl-alpha-D-muramoyl-L-alanyl-D-glutamate + ADP + phosphate + H(+). It functions in the pathway cell wall biogenesis; peptidoglycan biosynthesis. In terms of biological role, cell wall formation. Catalyzes the addition of glutamate to the nucleotide precursor UDP-N-acetylmuramoyl-L-alanine (UMA). The chain is UDP-N-acetylmuramoylalanine--D-glutamate ligase from Nitrosomonas europaea (strain ATCC 19718 / CIP 103999 / KCTC 2705 / NBRC 14298).